The primary structure comprises 122 residues: Large ribosomal subunit protein uL14 (122 aa).

Belongs to the universal ribosomal protein uL14 family. In terms of assembly, part of the 50S ribosomal subunit. Forms a cluster with proteins L3 and L19. In the 70S ribosome, L14 and L19 interact and together make contacts with the 16S rRNA in bridges B5 and B8.

In terms of biological role, binds to 23S rRNA. Forms part of two intersubunit bridges in the 70S ribosome. The chain is Large ribosomal subunit protein uL14 from Methylobacillus flagellatus (strain ATCC 51484 / DSM 6875 / VKM B-1610 / KT).